The chain runs to 209 residues: Type III pantothenate kinase (209 aa).

Residue 5 to 12 (DIGNSNAN) coordinates ATP. Substrate is bound by residues Tyr-68 and 72–75 (GIDR). The Proton acceptor role is filled by Asp-74. K(+) is bound at residue Asp-89. Ser-92 provides a ligand contact to ATP. Thr-144 is a binding site for substrate.

It belongs to the type III pantothenate kinase family. Homodimer. Requires NH4(+) as cofactor. K(+) serves as cofactor.

It localises to the cytoplasm. The catalysed reaction is (R)-pantothenate + ATP = (R)-4'-phosphopantothenate + ADP + H(+). It functions in the pathway cofactor biosynthesis; coenzyme A biosynthesis; CoA from (R)-pantothenate: step 1/5. Catalyzes the phosphorylation of pantothenate (Pan), the first step in CoA biosynthesis. This chain is Type III pantothenate kinase, found in Campylobacter jejuni (strain RM1221).